The chain runs to 382 residues: L-lysine 4-hydroxylase (382 aa).

H182, E184, and H318 together coordinate Fe cation.

This sequence belongs to the clavaminate synthase family. Fe(2+) is required as a cofactor.

It carries out the reaction L-lysine + 2-oxoglutarate + O2 = (4R)-4-hydroxy-L-lysine + succinate + CO2. Alpha-ketoglutarate-dependent dioxygenase that in vitro catalyzes the regio- and stereoselective hydroxylation of L-lysine, leading to (4R)-4-hydroxy-L-lysine. Cannot use D-lysine or L-ornithine as substrate. This is L-lysine 4-hydroxylase from Chitinophaga pinensis (strain ATCC 43595 / DSM 2588 / LMG 13176 / NBRC 15968 / NCIMB 11800 / UQM 2034).